The primary structure comprises 285 residues: Acetyl-coenzyme A carboxylase carboxyl transferase subunit beta (285 aa).

Residues 22–285 form the CoA carboxyltransferase N-terminal domain; it reads LWTKCEACGA…HPGVAYAPGV (264 aa). Zn(2+) is bound by residues Cys26, Cys29, Cys45, and Cys48. The C4-type zinc-finger motif lies at 26 to 48; it reads CEACGAQIYKKEFQENLHVCPKC.

It belongs to the AccD/PCCB family. As to quaternary structure, acetyl-CoA carboxylase is a heterohexamer composed of biotin carboxyl carrier protein (AccB), biotin carboxylase (AccC) and two subunits each of ACCase subunit alpha (AccA) and ACCase subunit beta (AccD). Requires Zn(2+) as cofactor.

The protein resides in the cytoplasm. The enzyme catalyses N(6)-carboxybiotinyl-L-lysyl-[protein] + acetyl-CoA = N(6)-biotinyl-L-lysyl-[protein] + malonyl-CoA. The protein operates within lipid metabolism; malonyl-CoA biosynthesis; malonyl-CoA from acetyl-CoA: step 1/1. In terms of biological role, component of the acetyl coenzyme A carboxylase (ACC) complex. Biotin carboxylase (BC) catalyzes the carboxylation of biotin on its carrier protein (BCCP) and then the CO(2) group is transferred by the transcarboxylase to acetyl-CoA to form malonyl-CoA. In Thermus thermophilus (strain ATCC BAA-163 / DSM 7039 / HB27), this protein is Acetyl-coenzyme A carboxylase carboxyl transferase subunit beta.